The chain runs to 192 residues: ATP synthase protein MI25 (192 aa).

Residues 29–49 traverse the membrane as a helical segment; sequence ISIYNEEMIVARCFIGFLIFS.

Belongs to the ATPase protein MI25 family. As to quaternary structure, F-type ATPases have 2 components, CF(1) - the catalytic core - and CF(0) - the membrane proton channel. CF(1) has five subunits: alpha(3), beta(3), gamma(1), delta(1), epsilon(1). CF(0) has three main subunits: a, b and c.

The protein localises to the mitochondrion membrane. Its function is as follows. This is one of the chains of the nonenzymatic component (CF(0) subunit) of the mitochondrial ATPase complex. The sequence is that of ATP synthase protein MI25 from Triticum timopheevii (Timopheev's wheat).